The primary structure comprises 429 residues: Serine--tRNA ligase (429 aa).

236–238 (TAE) contacts L-serine. Position 267 to 269 (267 to 269 (RSE)) interacts with ATP. An L-serine-binding site is contributed by Glu290. 354-357 (EVSS) contacts ATP. Ser390 is an L-serine binding site.

Belongs to the class-II aminoacyl-tRNA synthetase family. Type-1 seryl-tRNA synthetase subfamily. As to quaternary structure, homodimer. The tRNA molecule binds across the dimer.

Its subcellular location is the cytoplasm. The enzyme catalyses tRNA(Ser) + L-serine + ATP = L-seryl-tRNA(Ser) + AMP + diphosphate + H(+). It carries out the reaction tRNA(Sec) + L-serine + ATP = L-seryl-tRNA(Sec) + AMP + diphosphate + H(+). It participates in aminoacyl-tRNA biosynthesis; selenocysteinyl-tRNA(Sec) biosynthesis; L-seryl-tRNA(Sec) from L-serine and tRNA(Sec): step 1/1. Functionally, catalyzes the attachment of serine to tRNA(Ser). Is also able to aminoacylate tRNA(Sec) with serine, to form the misacylated tRNA L-seryl-tRNA(Sec), which will be further converted into selenocysteinyl-tRNA(Sec). This Wigglesworthia glossinidia brevipalpis protein is Serine--tRNA ligase.